Consider the following 183-residue polypeptide: MTATAQQLEYLKNSIKSIQDYPKPGILFRDVTSLLEDPKAYALSIDLLVERYKNAGINKVVGTEARGFLFGAPVALGLGVGFVPVRKPGKLPRETISETYDLEYGTDQLEIHVDAIKPGDKVLVVDDLLATGGTIEATVKLIRRLGGEVADAAFIINLFDLGGEQRLEKQGITSYSLVPFPGH.

This sequence belongs to the purine/pyrimidine phosphoribosyltransferase family. In terms of assembly, homodimer.

The protein localises to the cytoplasm. It carries out the reaction AMP + diphosphate = 5-phospho-alpha-D-ribose 1-diphosphate + adenine. The protein operates within purine metabolism; AMP biosynthesis via salvage pathway; AMP from adenine: step 1/1. In terms of biological role, catalyzes a salvage reaction resulting in the formation of AMP, that is energically less costly than de novo synthesis. The protein is Adenine phosphoribosyltransferase of Escherichia coli O157:H7.